The following is a 1871-amino-acid chain: Plexin-A3 (1871 aa).

The N-terminal stretch at 1–19 is a signal peptide; the sequence is MPSVCLLLLLFLAVGGALG. In terms of domain architecture, Sema spans 20–488; the sequence is NRPFRAFVVT…SEKQVSQLPV (469 aa). The Extracellular portion of the chain corresponds to 20-1220; that stretch reads NRPFRAFVVT…SAERALTLPA (1201 aa). An N-linked (GlcNAc...) asparagine glycan is attached at asparagine 59. 9 cysteine pairs are disulfide-bonded: cysteine 77-cysteine 86, cysteine 112-cysteine 120, cysteine 266-cysteine 387, cysteine 282-cysteine 338, cysteine 356-cysteine 375, cysteine 491-cysteine 508, cysteine 497-cysteine 539, cysteine 500-cysteine 517, and cysteine 511-cysteine 523. Asparagine 548 is a glycosylation site (N-linked (GlcNAc...) asparagine). Cysteine 574 and cysteine 594 are oxidised to a cystine. Residues asparagine 637, asparagine 738, and asparagine 746 are each glycosylated (N-linked (GlcNAc...) asparagine). 4 IPT/TIG domains span residues 840-933, 935-1020, 1023-1122, and 1125-1211; these read PRIT…YSFV, PTFD…YTYT, PTVT…FTYY, and PSFE…LHIS. Residues asparagine 1009, asparagine 1036, asparagine 1073, asparagine 1115, and asparagine 1162 are each glycosylated (N-linked (GlcNAc...) asparagine). A helical transmembrane segment spans residues 1221–1241; sequence MMGLAAGGGLLLLAITAVLVA. Residues 1242 to 1871 are Cytoplasmic-facing; it reads YKRKTQDADR…QIISLVSSDS (630 aa). Residue serine 1596 is modified to Phosphoserine.

Belongs to the plexin family. In terms of assembly, interacts with CBFA2T3/MTG16.

Its subcellular location is the cell membrane. Its function is as follows. Coreceptor for SEMA3A and SEMA3F. Necessary for signaling by class 3 semaphorins and subsequent remodeling of the cytoskeleton. Plays a role in axon guidance in the developing nervous system. Regulates the migration of sympathetic neurons, but not of neural crest precursors. Required for normal dendrite spine morphology in pyramidal neurons. May play a role in regulating semaphorin-mediated programmed cell death in the developing nervous system. Class 3 semaphorins bind to a complex composed of a neuropilin and a plexin. The plexin modulates the affinity of the complex for specific semaphorins, and its cytoplasmic domain is required for the activation of down-stream signaling events in the cytoplasm. This chain is Plexin-A3 (PLXNA3), found in Homo sapiens (Human).